Consider the following 896-residue polypeptide: Protein translocase subunit SecA (896 aa).

ATP is bound by residues Gln-87, 105–109 (GEGKT), and Asp-512. Disordered regions lie at residues 565–584 (RRID…PGSS) and 840–896 (EAAQ…AHEA). Residues Cys-876, Cys-878, Cys-887, and His-888 each contribute to the Zn(2+) site. Basic residues predominate over residues 882–896 (KKYKHCHGNRAAHEA).

This sequence belongs to the SecA family. In terms of assembly, monomer and homodimer. Part of the essential Sec protein translocation apparatus which comprises SecA, SecYEG and auxiliary proteins SecDF-YajC and YidC. Requires Zn(2+) as cofactor.

It localises to the cell inner membrane. The protein localises to the cytoplasm. It carries out the reaction ATP + H2O + cellular proteinSide 1 = ADP + phosphate + cellular proteinSide 2.. In terms of biological role, part of the Sec protein translocase complex. Interacts with the SecYEG preprotein conducting channel. Has a central role in coupling the hydrolysis of ATP to the transfer of proteins into and across the cell membrane, serving both as a receptor for the preprotein-SecB complex and as an ATP-driven molecular motor driving the stepwise translocation of polypeptide chains across the membrane. The polypeptide is Protein translocase subunit SecA (Mannheimia succiniciproducens (strain KCTC 0769BP / MBEL55E)).